A 946-amino-acid chain; its full sequence is Bifunctional glutamine synthetase adenylyltransferase/adenylyl-removing enzyme (946 aa).

The tract at residues 1–440 (MKPLSSPLQQ…VFNELIGDDE (440 aa)) is adenylyl removase. Positions 449-946 (SEQWRELWQD…ASWQKWLVEE (498 aa)) are adenylyl transferase.

The protein belongs to the GlnE family. Mg(2+) serves as cofactor.

The enzyme catalyses [glutamine synthetase]-O(4)-(5'-adenylyl)-L-tyrosine + phosphate = [glutamine synthetase]-L-tyrosine + ADP. The catalysed reaction is [glutamine synthetase]-L-tyrosine + ATP = [glutamine synthetase]-O(4)-(5'-adenylyl)-L-tyrosine + diphosphate. Involved in the regulation of glutamine synthetase GlnA, a key enzyme in the process to assimilate ammonia. When cellular nitrogen levels are high, the C-terminal adenylyl transferase (AT) inactivates GlnA by covalent transfer of an adenylyl group from ATP to specific tyrosine residue of GlnA, thus reducing its activity. Conversely, when nitrogen levels are low, the N-terminal adenylyl removase (AR) activates GlnA by removing the adenylyl group by phosphorolysis, increasing its activity. The regulatory region of GlnE binds the signal transduction protein PII (GlnB) which indicates the nitrogen status of the cell. This chain is Bifunctional glutamine synthetase adenylyltransferase/adenylyl-removing enzyme, found in Escherichia coli O81 (strain ED1a).